We begin with the raw amino-acid sequence, 297 residues long: 5'-3' exonuclease (297 aa).

The 92-residue stretch at 171–262 (EPDQIVDFKA…MKLEKELFAI (92 aa)) folds into the 5'-3' exonuclease domain.

5'-3' exonuclease acting preferentially on double-stranded DNA. The protein is 5'-3' exonuclease (polA) of Mycoplasmopsis pulmonis (strain UAB CTIP) (Mycoplasma pulmonis).